The primary structure comprises 420 residues: Pre-mRNA-splicing factor RBM22 (420 aa).

The residue at position 2 (Ala2) is an N-acetylalanine. Ser4 and Ser102 each carry phosphoserine. Glycyl lysine isopeptide (Lys-Gly) (interchain with G-Cter in SUMO2) cross-links involve residues Lys139 and Lys149. Residues 159 to 186 (RNRPHICSFWVKGECKRGEECPYRHEKP) form a C3H1-type zinc finger. Lys212 carries the post-translational modification N6-acetyllysine. The region spanning 232–305 (TTLYVGGLGD…RRLNVKWGRS (74 aa)) is the RRM domain. A Glycyl lysine isopeptide (Lys-Gly) (interchain with G-Cter in SUMO2) cross-link involves residue Lys290. 2 disordered regions span residues 303 to 343 (GRSQ…AAEE) and 371 to 420 (IAPP…HSSP). Residues 309-318 (RGKEKEKDGT) show a composition bias toward basic and acidic residues.

Belongs to the SLT11 family. Component of the pre-catalytic and catalytic spliceosome complexes. Component of the postcatalytic spliceosome P complex. Interacts with PDCD6; the interaction induces translocation of PDCD6 in the cytoplasm. Interacts with PPIL1.

The protein localises to the nucleus. It localises to the cytoplasm. Required for pre-mRNA splicing as component of the activated spliceosome. Involved in the first step of pre-mRNA splicing. Binds directly to the internal stem-loop (ISL) domain of the U6 snRNA and to the pre-mRNA intron near the 5' splice site during the activation and catalytic phases of the spliceosome cycle. Involved in both translocations of the nuclear SLU7 to the cytoplasm and the cytosolic calcium-binding protein PDCD6 to the nucleus upon cellular stress responses. The protein is Pre-mRNA-splicing factor RBM22 (Rbm22) of Rattus norvegicus (Rat).